Consider the following 525-residue polypeptide: Mannuronan C5-epimerase AlgG (525 aa).

An N-terminal signal peptide occupies residues 1-29; the sequence is MNVQRKLASTQLKPVLLGVLLATSAWSQA. PbH1 repeat units lie at residues 287–309, 311–334, 336–358, 360–382, and 383–405; these read ADDV…DPHD, SERL…IVSR, VNNS…VLDR, SEHN…TLYE, and SSNN…RMRN. His-308 serves as the catalytic Proton acceptor.

It belongs to the D-mannuronate C5-epimerase family.

The protein resides in the periplasm. The catalysed reaction is [(1-&gt;4)-beta-D-mannuronosyl](n) = [alginate](n). It participates in glycan biosynthesis; alginate biosynthesis. Its activity is regulated as follows. Inhibited by zinc. In terms of biological role, catalyzes the epimerization of beta-D-mannuronate to alpha-L-guluronate during the synthesis of the linear polysaccharide alginate. In addition, is part of a periplasmic protein complex that protects alginate from degradation by AlgL by channeling the newly formed alginate polymer through a scaffold that transfers the alginate polymer through the periplasmic space to the outer membrane secretin AlgE. In Azotobacter vinelandii, this protein is Mannuronan C5-epimerase AlgG.